We begin with the raw amino-acid sequence, 411 residues long: Glutamate dehydrogenase (411 aa).

Lys102 is a catalytic residue.

The protein belongs to the Glu/Leu/Phe/Val dehydrogenases family.

It carries out the reaction L-glutamate + NAD(+) + H2O = 2-oxoglutarate + NH4(+) + NADH + H(+). It catalyses the reaction L-glutamate + NADP(+) + H2O = 2-oxoglutarate + NH4(+) + NADPH + H(+). This chain is Glutamate dehydrogenase (GDH1), found in Zea mays (Maize).